A 473-amino-acid chain; its full sequence is MHPNISLPEPFIASMAKILPDPTQLADFIAACQRPLRKSIRVNTLKISVAEFCQRAAEKEWQLTPVPWCENGFWIDADESLVPLGNTAEHMAGLFYIQEASSMMPVSALFMGNAHYDSVLDMAAAPGSKTTQMAALMDNQGVLVANEFSASRVKVLHANIERCGIRNTALSNFDGCVFGGWLPERFDAVLIDAPCSGEGTIRKDPDAMKNWSLESIQSIANTQKALIESAFQALKVGGTLVYSTCTLSREENQQVCWHLKQTYGDAVSFESLGNLFEHASLALTEEGFLHIFPQMYDCEGFFVAKIRKLASVPTPEVNKRLGKFPFNKASHKQQAEIAQQLHKSLGIELPSDAQVWLRDNDVWLFPEALEPLLGELRFSRMGIKIAEAHKSGYRWQHQVATCLASSSASHSVELDTTQAREWFMGRDVRPEGQSGQGEVIIRYANDVIGLGKWVGNRVKNGLPRELVRDKNLF.

S-adenosyl-L-methionine-binding positions include 123–129 (AAAPGSK), glutamate 147, aspartate 174, and aspartate 192. Cysteine 245 (nucleophile) is an active-site residue.

Belongs to the class I-like SAM-binding methyltransferase superfamily. RsmB/NOP family.

The protein localises to the cytoplasm. The enzyme catalyses cytidine(1407) in 16S rRNA + S-adenosyl-L-methionine = 5-methylcytidine(1407) in 16S rRNA + S-adenosyl-L-homocysteine + H(+). Specifically methylates the cytosine at position 1407 (m5C1407) of 16S rRNA. The chain is Ribosomal RNA small subunit methyltransferase F from Vibrio cholerae serotype O1 (strain ATCC 39315 / El Tor Inaba N16961).